The following is a 135-amino-acid chain: Insoluble matrix shell protein 5 (135 aa).

Positions 1 to 16 are cleaved as a signal peptide; the sequence is MILVVTLACLIAVVCC. EF-hand domains lie at 21–56 and 93–128; these read TDQG…ADLN and IEFV…TVRP. 10 residues coordinate Ca(2+): D34, D36, N38, K40, E45, D106, N108, D110, E112, and E117.

Component of the acid-insoluble organic matrix of the calcified shell.

The protein resides in the secreted. The protein is Insoluble matrix shell protein 5 of Ruditapes philippinarum (Japanese carpet shell).